We begin with the raw amino-acid sequence, 155 residues long: Large ribosomal subunit protein uL22 (155 aa).

The protein belongs to the universal ribosomal protein uL22 family. Part of the 50S ribosomal subunit.

Its function is as follows. This protein binds specifically to 23S rRNA. It makes multiple contacts with different domains of the 23S rRNA in the assembled 50S subunit and ribosome. The globular domain of the protein is located near the polypeptide exit tunnel on the outside of the subunit, while an extended beta-hairpin is found that lines the wall of the exit tunnel in the center of the 70S ribosome. This is Large ribosomal subunit protein uL22 from Pyrococcus furiosus (strain ATCC 43587 / DSM 3638 / JCM 8422 / Vc1).